The chain runs to 285 residues: MKFCRFGQRGQEKPGIIDADGKIRDLSGVVPELTIEALAAAKGADVASLPLVEGEPRYGVPVKGIGKIVAIGLNYEDHAIESNLPIPTEPMMFMKALSSLNGPNDEVVLPKNSTHGDWEVELGVVIGETCRFVSEDEALSKVAGYVLVNDVSERFNQKQRGTQWSKGKGHDTFCPVGPWLVTPDEVGDPQDLDMHLNVNGTRMQTGNTKTMIFNVAQLISYVSEYITLYPGDLMITGTPPGVGEGKKPQAIYLKAGDVMELGIEKLGTQRQQVSEWRHLGDEVFG.

Leu73 is a pyruvate binding site. Mg(2+) is bound by residues Glu119, Glu121, and Asp150. Residues Lys168 and Thr238 each coordinate pyruvate.

This sequence belongs to the FAH family. In terms of assembly, homodimer. Mg(2+) serves as cofactor.

It carries out the reaction 2,4-didehydro-3-deoxy-L-rhamnonate + H2O = (S)-lactate + pyruvate + H(+). It participates in carbohydrate degradation; L-rhamnose degradation. Hydrolase that catalyzes the hydrolysis of 2,4-didehydro-3-deoxy-L-rhamnonate to pyruvate and L-lactate. Can also hydrolyze L-2,4-diketo-3-deoxylyxonate and L-2,4-diketo-3-deoxymannonate. In vitro can also use acylpyruvates such as acetylpyruvate and trimethylacetopyruvate. Catalyzes the fifth (last) step in an alternative pathway for rhamnose utilization that does not involve phosphorylated intermediates. The chain is 2,4-didehydro-3-deoxy-L-rhamnonate hydrolase from Sphingomonas sp. (strain SKA58).